The sequence spans 196 residues: Molybdenum cofactor guanylyltransferase (196 aa).

GTP contacts are provided by residues 10–12 (LAG), K23, N51, D69, and D99. A Mg(2+)-binding site is contributed by D99.

This sequence belongs to the MobA family. As to quaternary structure, monomer. Mg(2+) serves as cofactor.

It is found in the cytoplasm. The catalysed reaction is Mo-molybdopterin + GTP + H(+) = Mo-molybdopterin guanine dinucleotide + diphosphate. Functionally, transfers a GMP moiety from GTP to Mo-molybdopterin (Mo-MPT) cofactor (Moco or molybdenum cofactor) to form Mo-molybdopterin guanine dinucleotide (Mo-MGD) cofactor. The chain is Molybdenum cofactor guanylyltransferase from Shewanella sp. (strain W3-18-1).